A 403-amino-acid polypeptide reads, in one-letter code: Succinoglycan biosynthesis protein ExoL (403 aa).

The protein resides in the cytoplasm. Its pathway is glycan metabolism; exopolysaccharide biosynthesis. Its function is as follows. Essential for succinoglycan (EPS I) synthesis and nodule infection. Glycosyltransferase needed for the addition of the third sugar (glucose), catalyzes the formation of a beta-1,4 linkage between the second and third sugars. The polypeptide is Succinoglycan biosynthesis protein ExoL (exoL) (Rhizobium meliloti (strain 1021) (Ensifer meliloti)).